The primary structure comprises 164 residues: MALNLQDKKAIVAEVNEAASGALSAVVADSRGVTVGAMTSLRKQAREAGVYMRVVRNTLARRAVEGTQYECLQDTFTGPSLLAFSNEHPGAAARLFKDFAKENKNFEIKAAAFEGAVTDADVLATLPTYDEAIARLMMCMKEASAGKLVRTIAAVRDQKEEAEA.

The protein belongs to the universal ribosomal protein uL10 family. Part of the ribosomal stalk of the 50S ribosomal subunit. The N-terminus interacts with L11 and the large rRNA to form the base of the stalk. The C-terminus forms an elongated spine to which L12 dimers bind in a sequential fashion forming a multimeric L10(L12)X complex.

Functionally, forms part of the ribosomal stalk, playing a central role in the interaction of the ribosome with GTP-bound translation factors. This Aliivibrio salmonicida (strain LFI1238) (Vibrio salmonicida (strain LFI1238)) protein is Large ribosomal subunit protein uL10.